Reading from the N-terminus, the 320-residue chain is D-alanine--D-alanine ligase (320 aa).

The region spanning lysine 101–serine 317 is the ATP-grasp domain. Isoleucine 148–threonine 203 lines the ATP pocket. Positions 271, 284, and 286 each coordinate Mg(2+).

The protein belongs to the D-alanine--D-alanine ligase family. The cofactor is Mg(2+). Mn(2+) serves as cofactor.

It localises to the cytoplasm. The catalysed reaction is 2 D-alanine + ATP = D-alanyl-D-alanine + ADP + phosphate + H(+). It functions in the pathway cell wall biogenesis; peptidoglycan biosynthesis. Functionally, cell wall formation. The polypeptide is D-alanine--D-alanine ligase (Hamiltonella defensa subsp. Acyrthosiphon pisum (strain 5AT)).